Consider the following 77-residue polypeptide: Translation initiation factor IF-1, chloroplastic (77 aa).

The S1-like domain maps to 1–71; it reads MKEQKLIHEG…TKGRIIYRLR (71 aa).

The protein belongs to the IF-1 family. Component of the 30S ribosomal translation pre-initiation complex which assembles on the 30S ribosome in the order IF-2 and IF-3, IF-1 and N-formylmethionyl-tRNA(fMet); mRNA recruitment can occur at any time during PIC assembly.

The protein localises to the plastid. The protein resides in the chloroplast. One of the essential components for the initiation of protein synthesis. Stabilizes the binding of IF-2 and IF-3 on the 30S subunit to which N-formylmethionyl-tRNA(fMet) subsequently binds. Helps modulate mRNA selection, yielding the 30S pre-initiation complex (PIC). Upon addition of the 50S ribosomal subunit IF-1, IF-2 and IF-3 are released leaving the mature 70S translation initiation complex. The sequence is that of Translation initiation factor IF-1, chloroplastic from Drimys granadensis.